We begin with the raw amino-acid sequence, 90 residues long: uncharacterized protein (90 aa).

This is an uncharacterized protein from Homo sapiens (Human).